Reading from the N-terminus, the 174-residue chain is Interleukin-1 receptor antagonist protein (174 aa).

The first 23 residues, 1 to 23 (MDIYIHGYLICLLLFLFRSETAC), serve as a signal peptide directing secretion. Residues Cys89 and Cys139 are joined by a disulfide bond. Asn107 carries N-linked (GlcNAc...) asparagine glycosylation.

Belongs to the IL-1 family.

The protein localises to the secreted. Its function is as follows. Anti-inflammatory antagonist of interleukin-1 family of proinflammatory cytokines such as interleukin-1beta/IL1B and interleukin-1alpha/IL1A. Protects from immune dysregulation and uncontrolled systemic inflammation triggered by IL1 for a range of innate stimulatory agents such as pathogens. The polypeptide is Interleukin-1 receptor antagonist protein (IL1RN) (Bos taurus (Bovine)).